A 104-amino-acid chain; its full sequence is MFIYVYHHLCCSRRCRYLFFLNGSASINWTKYCSELLSVRASFSSRISSRTNKIFKHQIFCFPENSISSLFINRMFSLKSFNILRYSCSSRVLQTMSFLMNHLI.

This is an uncharacterized protein from Saccharomyces cerevisiae (strain ATCC 204508 / S288c) (Baker's yeast).